Here is a 119-residue protein sequence, read N- to C-terminus: MDLKSRAETFLTTIVNRRETASIEHYLHPDAQFKHNDLPSMSTAELLAFWPQVLDESPDFRVQILATIAEGLRVWVYSRVEGRLGKGVMDDVHMLEFDGNGLLIRSRGIQREVVEEMEK.

The protein belongs to the aurE cyclase family.

The protein operates within mycotoxin biosynthesis. Probable cyclase; part of the gene cluster that mediates the biosynthesis of ochratoxin A (OTA), a mycotoxin composed of a chlorinated type I polyketide dihydroisocoumarin moiety linked to L-phenylalanine, and demonstrated to have nephrotoxic, immunotoxic, genotoxic, neurotoxic, and teratogenic properties. OtaY is probably involved in the polyketide cyclization. The pathway begins with the highly reducing polyketide synthase otaA that catalyzes the formation of the isocoumarin group during the initial stages of biosynthesis, starting from one acetate and 4 malonate units, to originate the characteristic pentaketide skeleton 7-methylmellein (7-MM) of the OTA molecule. The newly identified cyclase otaY might be involved in the polyketide cyclization reaction during the initial steps of the OTA biosynthesis. 7-MM is then oxidized into 7-carboxymellein (also called ochratoxin beta) by the cytochrome P450 monooxygenase otaC. The NRPS encoded by the otaB gene is involved in the linking of phenylalanine to the dihydroisocoumarin ring. The reaction catalyzed by NRPS results in the production of ochratoxin B (OTB), which is the non-chlorinated analog of OTA and which subsequently serves as the substrate of the halogenase otaD for chlorination activity to form the final molecular structure of OTA, containing a chlorine atom in the C-5 position of the molecule. This Aspergillus niger (strain ATCC MYA-4892 / CBS 513.88 / FGSC A1513) protein is Probable cyclase otaY.